Here is an 87-residue protein sequence, read N- to C-terminus: Small ribosomal subunit protein bS20 (87 aa).

It belongs to the bacterial ribosomal protein bS20 family.

Binds directly to 16S ribosomal RNA. This Clostridium perfringens (strain 13 / Type A) protein is Small ribosomal subunit protein bS20.